We begin with the raw amino-acid sequence, 322 residues long: MLQGHERSITQIKYNREGDLLFSCSKDQKPNVWYSLNGERLGTYDGHQGAVWCLDVDWESRKLITGAGDMTTKIWDVEYGTIIASIPSKSSVRTSNFSFSGNQAAYSTDKAMGQSCELFIIDVRNADSSLAEQTPTLRIPMTESKITSMLWGPLDETIITGHDNGNIAIWDIRKGQKVVDSGSDHTAGINDMQLSKDGTMFVTASKDTTAKLFDSESLMCLKTYKTERPVNSAAISPILDHVVLGGGQDAMEVTTTSTKAGKFDSRFFHLIYEEEFARLKGHFGPINSLAFHPDGKSYASGGEDGFVRVQTFDSTYFENIFE.

5 WD repeats span residues 4-43 (GHER…RLGT), 46-85 (GHQG…IIAS), 141-180 (MTES…KVVD), 184-223 (DHTA…CLKT), and 281-322 (GHFG…NIFE).

The protein belongs to the eIF-3 subunit I family. Component of the eukaryotic translation initiation factor 3 (eIF-3) complex. The eIF-3 complex interacts with pix.

It is found in the cytoplasm. Functionally, component of the eukaryotic translation initiation factor 3 (eIF-3) complex, which is involved in protein synthesis of a specialized repertoire of mRNAs and, together with other initiation factors, stimulates binding of mRNA and methionyl-tRNAi to the 40S ribosome. The eIF-3 complex specifically targets and initiates translation of a subset of mRNAs involved in cell proliferation. This chain is Eukaryotic translation initiation factor 3 subunit I, found in Drosophila ananassae (Fruit fly).